Here is a 512-residue protein sequence, read N- to C-terminus: Glutamate--tRNA ligase (512 aa).

The 'HIGH' region signature appears at 11–21 (PSPTGALHIGG). Residues 263–267 (KLSKR) carry the 'KMSKS' region motif. K266 contributes to the ATP binding site.

It belongs to the class-I aminoacyl-tRNA synthetase family. Glutamate--tRNA ligase type 1 subfamily. In terms of assembly, monomer.

The protein localises to the cytoplasm. The catalysed reaction is tRNA(Glu) + L-glutamate + ATP = L-glutamyl-tRNA(Glu) + AMP + diphosphate. Its function is as follows. Catalyzes the attachment of glutamate to tRNA(Glu) in a two-step reaction: glutamate is first activated by ATP to form Glu-AMP and then transferred to the acceptor end of tRNA(Glu). The sequence is that of Glutamate--tRNA ligase from Amoebophilus asiaticus (strain 5a2).